The chain runs to 188 residues: Elongation factor P (188 aa).

The protein belongs to the elongation factor P family.

Its subcellular location is the cytoplasm. Its pathway is protein biosynthesis; polypeptide chain elongation. Functionally, involved in peptide bond synthesis. Stimulates efficient translation and peptide-bond synthesis on native or reconstituted 70S ribosomes in vitro. Probably functions indirectly by altering the affinity of the ribosome for aminoacyl-tRNA, thus increasing their reactivity as acceptors for peptidyl transferase. The polypeptide is Elongation factor P (Gluconobacter oxydans (strain 621H) (Gluconobacter suboxydans)).